The sequence spans 546 residues: 6'''-hydroxyparomomycin C oxidase (546 aa).

Residues 1 to 30 (MERLRGPSPLENTTARHPAPLGPAHRDGLE) are disordered. Catalysis depends on H475, which acts as the Proton acceptor.

This sequence belongs to the GMC oxidoreductase family. FAD serves as cofactor.

Its pathway is antibiotic biosynthesis; lividomycin biosynthesis. Its function is as follows. Glucosaminyl-6'-oxidase involved in the biosynthetic pathway of lividomycin by mediating FAD-dependent dehydrogenation of 6'''-hydroxyparomomycin to paromomycin. The chain is 6'''-hydroxyparomomycin C oxidase (livQ) from Streptomyces lividus.